The primary structure comprises 429 residues: Glucose-1-phosphate adenylyltransferase (429 aa).

Residues Y116, G181, 196-197 (EK), and S214 contribute to the alpha-D-glucose 1-phosphate site.

This sequence belongs to the bacterial/plant glucose-1-phosphate adenylyltransferase family. In terms of assembly, homotetramer.

The catalysed reaction is alpha-D-glucose 1-phosphate + ATP + H(+) = ADP-alpha-D-glucose + diphosphate. The protein operates within glycan biosynthesis; glycogen biosynthesis. Involved in the biosynthesis of ADP-glucose, a building block required for the elongation reactions to produce glycogen. Catalyzes the reaction between ATP and alpha-D-glucose 1-phosphate (G1P) to produce pyrophosphate and ADP-Glc. The sequence is that of Glucose-1-phosphate adenylyltransferase from Paramagnetospirillum magneticum (strain ATCC 700264 / AMB-1) (Magnetospirillum magneticum).